Here is a 356-residue protein sequence, read N- to C-terminus: Tyrosine recombinase XerS (356 aa).

Residues 16–121 (TMPWYILEYY…ALSSLYKYLT (106 aa)) enclose the Core-binding (CB) domain. The region spanning 169-354 (EFLQYIDTEY…VNDEQKNALD (186 aa)) is the Tyr recombinase domain. Residues arginine 210, lysine 234, histidine 306, arginine 309, and histidine 332 contribute to the active site. Tyrosine 341 acts as the O-(3'-phospho-DNA)-tyrosine intermediate in catalysis.

Belongs to the 'phage' integrase family. XerS subfamily.

The protein localises to the cytoplasm. Its activity is regulated as follows. FtsK is required for recombination. Site-specific tyrosine recombinase, which acts by catalyzing the cutting and rejoining of the recombining DNA molecules. Essential to convert dimers of the bacterial chromosome into monomers to permit their segregation at cell division. The polypeptide is Tyrosine recombinase XerS (Streptococcus sanguinis (strain SK36)).